A 191-amino-acid chain; its full sequence is Elongation factor P (191 aa).

The protein belongs to the elongation factor P family.

Its subcellular location is the cytoplasm. The protein operates within protein biosynthesis; polypeptide chain elongation. Its function is as follows. Involved in peptide bond synthesis. Stimulates efficient translation and peptide-bond synthesis on native or reconstituted 70S ribosomes in vitro. Probably functions indirectly by altering the affinity of the ribosome for aminoacyl-tRNA, thus increasing their reactivity as acceptors for peptidyl transferase. The sequence is that of Elongation factor P from Ralstonia pickettii (strain 12J).